The chain runs to 286 residues: uncharacterized protein (286 aa).

A Radical SAM core domain is found at 2–221 (VDGMKHLILK…PIYIKNLQKR (220 aa)). [4Fe-4S] cluster contacts are provided by Cys16, Cys20, and Cys23.

This sequence belongs to the radical SAM superfamily. Anaerobic sulfatase-maturating enzyme family. Requires [4Fe-4S] cluster as cofactor.

This is an uncharacterized protein from Methanocaldococcus jannaschii (strain ATCC 43067 / DSM 2661 / JAL-1 / JCM 10045 / NBRC 100440) (Methanococcus jannaschii).